Consider the following 229-residue polypeptide: Urease accessory protein UreG (229 aa).

Over residues 1-15 the composition is skewed to basic and acidic residues; it reads MPPHFIDGEPHDHQH. The segment at 1–20 is disordered; that stretch reads MPPHFIDGEPHDHQHDRPRR. Position 34–41 (34–41) interacts with GTP; the sequence is GPVGSGKT.

It belongs to the SIMIBI class G3E GTPase family. UreG subfamily. In terms of assembly, homodimer. UreD, UreF and UreG form a complex that acts as a GTP-hydrolysis-dependent molecular chaperone, activating the urease apoprotein by helping to assemble the nickel containing metallocenter of UreC. The UreE protein probably delivers the nickel.

It is found in the cytoplasm. Facilitates the functional incorporation of the urease nickel metallocenter. This process requires GTP hydrolysis, probably effectuated by UreG. In Rhodococcus jostii (strain RHA1), this protein is Urease accessory protein UreG.